The primary structure comprises 109 residues: RNA-binding protein Hfq (109 aa).

The Sm domain maps to D9–V68. The tract at residues P77 to E109 is disordered.

It belongs to the Hfq family. Homohexamer.

RNA chaperone that binds small regulatory RNA (sRNAs) and mRNAs to facilitate mRNA translational regulation in response to envelope stress, environmental stress and changes in metabolite concentrations. Also binds with high specificity to tRNAs. The protein is RNA-binding protein Hfq of Francisella tularensis subsp. mediasiatica (strain FSC147).